Consider the following 92-residue polypeptide: Small ribosomal subunit protein bS18 (92 aa).

The protein belongs to the bacterial ribosomal protein bS18 family. Part of the 30S ribosomal subunit. Forms a tight heterodimer with protein bS6.

Binds as a heterodimer with protein bS6 to the central domain of the 16S rRNA, where it helps stabilize the platform of the 30S subunit. The chain is Small ribosomal subunit protein bS18 from Cupriavidus taiwanensis (strain DSM 17343 / BCRC 17206 / CCUG 44338 / CIP 107171 / LMG 19424 / R1) (Ralstonia taiwanensis (strain LMG 19424)).